Consider the following 595-residue polypeptide: P2X purinoceptor 7 (595 aa).

Residues 1–22 (MPACCSWNDVFQYETNKVTRIQ) lie on the Cytoplasmic side of the membrane. Cysteine 4 carries S-palmitoyl cysteine lipidation. The helical transmembrane segment at 23–46 (SVNYGTIKWILHMTVFSYVSFALM) threads the bilayer. Topologically, residues 47-328 (SDKLYQRKEP…ILVFGTGGKF (282 aa)) are extracellular. Asparagine 74 carries an N-linked (GlcNAc...) asparagine glycan. 3 disulfides stabilise this stretch: cysteine 119–cysteine 168, cysteine 129–cysteine 152, and cysteine 135–cysteine 162. Arginine 125 is modified (ADP-ribosylarginine). An N-linked (GlcNAc...) asparagine glycan is attached at asparagine 187. Threonine 189 serves as a coordination point for ATP. Residues asparagine 202 and asparagine 213 are each glycosylated (N-linked (GlcNAc...) asparagine). Cysteine 216 and cysteine 226 are disulfide-bonded. N-linked (GlcNAc...) asparagine glycosylation occurs at asparagine 241. Residues cysteine 260 and cysteine 269 are joined by a disulfide bond. Residue asparagine 284 is glycosylated (N-linked (GlcNAc...) asparagine). Residues arginine 294 and lysine 311 each contribute to the ATP site. Residues 329 to 353 (DIIQLVVYIGSTLSYFGLATVCIDL) traverse the membrane as a helical segment. Serine 342 lines the Na(+) pocket. The Cytoplasmic portion of the chain corresponds to 354-595 (IINTYASTCC…GQYSGFKYPY (242 aa)). The segment at 360 to 377 (STCCRSRVYPSCKCCEPC) is C-cys anchor. S-palmitoyl cysteine attachment occurs at residues cysteine 362, cysteine 363, cysteine 374, and cysteine 377. A cytoplasmic ballast region spans residues 395–595 (KPTLKYVSFV…GQYSGFKYPY (201 aa)). Zn(2+)-binding residues include cysteine 479, cysteine 499, and cysteine 506. Residues arginine 546, histidine 547, tyrosine 550, and alanine 567 each contribute to the GTP site. Cysteine 572 contributes to the Zn(2+) binding site. GTP-binding residues include lysine 583, serine 589, and glycine 590.

Belongs to the P2X receptor family. In terms of assembly, homotrimer. Interacts with LAMA3, ITGB2, ACTB, ACTN4, SVIL, MPP3, HSPA1, HSPCB, HSPA8, PIK230 and PTPRB. Interacts (via C-terminus) with EMP2. Post-translationally, phosphorylation results in its inactivation. In terms of processing, ADP-ribosylation at Arg-125 is necessary and sufficient to activate P2RX7 and gate the channel. Palmitoylation of several cysteines in the C-terminal cytoplasmic tail is required for efficient localization to cell surface. Palmitoylation prevents channel desensitization by physically anchoring the palmitoylated groups to the membrane.

The protein resides in the cell membrane. It carries out the reaction Ca(2+)(in) = Ca(2+)(out). It catalyses the reaction K(+)(in) = K(+)(out). The enzyme catalyses Na(+)(in) = Na(+)(out). Its activity is regulated as follows. Activated by high extracellular ATP levels (0.1-2.5 mM). The synthetic analog 2'(3')-O-(4-benzoylbenzoyl)ATP (BzATP) acts as a potent agonist. Does not undergo desensitization, instead, undergoes a facilitation process where currents progressively increase with repetitive or prolonged agonist application. Palmitoylation prevents channel desensitization. The permeability of the P2RX7 channel is modulated by the amount of cholesterol in the plasma membrane. Its function is as follows. ATP-gated nonselective transmembrane cation channel that requires high millimolar concentrations of ATP for activation. Upon ATP binding, it rapidly opens to allow the influx of small cations Na(+) and Ca(2+), and the K(+) efflux. Also has the ability to form a large pore in the cell membrane, allowing the passage of large cationic molecules. In microglia, may mediate the transmembrane transport of exogenous NADPH. In immune cells, P2RX7 acts as a molecular sensor in pathological inflammatory states by detecting and responding to high local concentrations of extracellar ATP. In microglial cells, P2RX7 activation leads to the release of pro-inflammatory cytokines, such as IL-1beta and IL-18, through the activation of the NLRP3 inflammasome and caspase-1. Cooperates with KCNK6 to activate NLRP3 inflammasome. Activates death pathways leading to apoptosis and autophagy. Activates death pathways leading to pyroptosis. Functionally, has a higher affinity for ATP, slower deactivation and an increased propensity to form large cation-permeable pores. In Rattus norvegicus (Rat), this protein is P2X purinoceptor 7 (P2rx7).